A 311-amino-acid chain; its full sequence is Putative F-box protein At3g28280 (311 aa).

Residues 1 to 43 enclose the F-box domain; sequence MNSLPEDLLAMILVKLPIKIFTTFKIVCTQWESMVDSPYFRDL.

The protein is Putative F-box protein At3g28280 of Arabidopsis thaliana (Mouse-ear cress).